We begin with the raw amino-acid sequence, 151 residues long: Ribosome maturation factor RimP (151 aa).

The protein belongs to the RimP family.

It is found in the cytoplasm. In terms of biological role, required for maturation of 30S ribosomal subunits. This Persephonella marina (strain DSM 14350 / EX-H1) protein is Ribosome maturation factor RimP.